The sequence spans 199 residues: dITP/XTP pyrophosphatase (199 aa).

A substrate-binding site is contributed by 7–12; it reads SANKGK. Residues Asp38 and Asp73 each coordinate Mg(2+). Asp73 serves as the catalytic Proton acceptor. Substrate is bound by residues Ser74, 155-158, Lys178, and 183-184; these read FGYD and HR.

Belongs to the HAM1 NTPase family. Homodimer. It depends on Mg(2+) as a cofactor.

It carries out the reaction XTP + H2O = XMP + diphosphate + H(+). The enzyme catalyses dITP + H2O = dIMP + diphosphate + H(+). It catalyses the reaction ITP + H2O = IMP + diphosphate + H(+). In terms of biological role, pyrophosphatase that catalyzes the hydrolysis of nucleoside triphosphates to their monophosphate derivatives, with a high preference for the non-canonical purine nucleotides XTP (xanthosine triphosphate), dITP (deoxyinosine triphosphate) and ITP. Seems to function as a house-cleaning enzyme that removes non-canonical purine nucleotides from the nucleotide pool, thus preventing their incorporation into DNA/RNA and avoiding chromosomal lesions. The sequence is that of dITP/XTP pyrophosphatase from Aliarcobacter butzleri (strain RM4018) (Arcobacter butzleri).